Consider the following 118-residue polypeptide: Large ribosomal subunit protein uL18 (118 aa).

This sequence belongs to the universal ribosomal protein uL18 family. Part of the 50S ribosomal subunit; part of the 5S rRNA/L5/L18/L25 subcomplex. Contacts the 5S and 23S rRNAs.

In terms of biological role, this is one of the proteins that bind and probably mediate the attachment of the 5S RNA into the large ribosomal subunit, where it forms part of the central protuberance. In Sulfurovum sp. (strain NBC37-1), this protein is Large ribosomal subunit protein uL18.